The chain runs to 324 residues: Carbonic anhydrase 15 (324 aa).

Residues 1-18 (MWALDFLLSFLLIQLAAQ) form the signal peptide. Positions 23-293 (GTWCYDSQDP…LGGRRISASP (271 aa)) constitute an Alpha-carbonic anhydrase domain. The active-site Proton acceptor is the H90. Zn(2+)-binding residues include H122, H124, and H147. Y155 is an active-site residue. N-linked (GlcNAc...) asparagine glycans are attached at residues N184, N194, and N203. A substrate-binding site is contributed by 231-232 (TT). Residues 269–290 (LHPRPLTSNFRPQQPLGGRRIS) are disordered.

The protein belongs to the alpha-carbonic anhydrase family. The cofactor is Zn(2+).

It is found in the secreted. It carries out the reaction hydrogencarbonate + H(+) = CO2 + H2O. Repressed by coumarins. Functionally, reversible hydration of carbon dioxide. The protein is Carbonic anhydrase 15 (Ca15) of Mus musculus (Mouse).